The following is a 122-amino-acid chain: Basic phospholipase A2 homolog Gln49-PLA2 (122 aa).

Intrachain disulfides connect Cys26/Cys115, Cys28/Cys44, Cys43/Cys95, Cys49/Cys122, Cys50/Cys88, Cys57/Cys81, and Cys75/Cys86.

This sequence belongs to the phospholipase A2 family. Group II subfamily. Q49 sub-subfamily. In terms of assembly, monomer. As to expression, expressed by the venom gland.

It localises to the secreted. In terms of biological role, snake venom phospholipase A2 (PLA2) homolog that shows local myotoxicity, apparent anticoagulant activity, and neurotoxicity. Shows analgesic effect on mice due to a decrease of action potentials and nerve conduction velocity. These effects are caused by inhibition of voltage-gated ion channels (potassium (Kv) and sodium (Nav)). In addition, analgesic effects are antagonized by naloxone, implying the mechanism of action is correlated with opioid receptors (probably indirectly). Does not show detectable PLA2 activity on egg yolk phospholipids. This is Basic phospholipase A2 homolog Gln49-PLA2 from Gloydius ussuriensis (Ussuri mamushi).